The following is a 65-amino-acid chain: Large ribosomal subunit protein bL35 (65 aa).

Belongs to the bacterial ribosomal protein bL35 family.

The chain is Large ribosomal subunit protein bL35 from Edwardsiella ictaluri (strain 93-146).